A 429-amino-acid polypeptide reads, in one-letter code: GDP-fucose protein O-fucosyltransferase 2 (429 aa).

A signal peptide spans 1–21 (MATLSFVFLLLGAVSWPPASA). 53–57 (PEGFN) contacts GDP-beta-L-fucose. Glutamate 54 (proton acceptor) is an active-site residue. Cysteine 161 and cysteine 192 are joined by a disulfide. Asparagine 189, asparagine 209, and asparagine 259 each carry an N-linked (GlcNAc...) asparagine glycan. GDP-beta-L-fucose contacts are provided by residues 292 to 294 (HLR), aspartate 371, and 388 to 389 (TF). The cysteines at positions 412 and 419 are disulfide-linked.

This sequence belongs to the glycosyltransferase 68 family. As to expression, isoform A is expressed in fetal liver and peripheral blood lymphocytes. Isoform B is expressed in spleen, lung, testis, bone marrow, thymus, pancreas, prostate, fetal brain, fetal liver and fetal kidney. Isoform C is expressed in brain, heart, spleen, liver, lung, stomach, testis, placenta, skin, thymus, pancreas, mammary gland, prostate, fetal brain, fetal liver and fetal heart.

The protein localises to the endoplasmic reticulum. Its subcellular location is the golgi apparatus. The catalysed reaction is L-seryl-[protein] + GDP-beta-L-fucose = 3-O-(alpha-L-fucosyl)-L-seryl-[protein] + GDP + H(+). It catalyses the reaction L-threonyl-[protein] + GDP-beta-L-fucose = 3-O-(alpha-L-fucosyl)-L-threonyl-[protein] + GDP + H(+). It participates in protein modification; protein glycosylation. Its activity is regulated as follows. Inhibited by EDTA and by Zn(2+). In terms of biological role, catalyzes the reaction that attaches fucose through an O-glycosidic linkage to a conserved serine or threonine residue in the consensus sequence C1-X-X-S/T-C2 of thrombospondin type I repeats (TSRs) where C1 and C2 are the first and second cysteines of the repeat, respectively. O-fucosylates members of several protein families including the ADAMTS, the thrombospondin (TSP) and spondin families. Required for the proper secretion of ADAMTS family members such as ADAMTSL1 and ADAMTS13. The O-fucosylation of TSRs is also required for restricting epithelial to mesenchymal transition (EMT), maintaining the correct patterning of mesoderm and localization of the definite endoderm. This Homo sapiens (Human) protein is GDP-fucose protein O-fucosyltransferase 2 (POFUT2).